Reading from the N-terminus, the 311-residue chain is Acetyl-coenzyme A carboxylase carboxyl transferase subunit beta (311 aa).

One can recognise a CoA carboxyltransferase N-terminal domain in the interval 27–296 (LWTKCGHCSA…AEAADAPEAG (270 aa)). 4 residues coordinate Zn(2+): C31, C34, C50, and C53. The C4-type zinc-finger motif lies at 31–53 (CGHCSAVLYRPELERNQEVCPKC). Low complexity predominate over residues 286–299 (AAEAADAPEAGEQP). The interval 286 to 311 (AAEAADAPEAGEQPSEATDPVGEHWD) is disordered.

This sequence belongs to the AccD/PCCB family. As to quaternary structure, acetyl-CoA carboxylase is a heterohexamer composed of biotin carboxyl carrier protein (AccB), biotin carboxylase (AccC) and two subunits each of ACCase subunit alpha (AccA) and ACCase subunit beta (AccD). It depends on Zn(2+) as a cofactor.

The protein localises to the cytoplasm. It carries out the reaction N(6)-carboxybiotinyl-L-lysyl-[protein] + acetyl-CoA = N(6)-biotinyl-L-lysyl-[protein] + malonyl-CoA. It participates in lipid metabolism; malonyl-CoA biosynthesis; malonyl-CoA from acetyl-CoA: step 1/1. In terms of biological role, component of the acetyl coenzyme A carboxylase (ACC) complex. Biotin carboxylase (BC) catalyzes the carboxylation of biotin on its carrier protein (BCCP) and then the CO(2) group is transferred by the transcarboxylase to acetyl-CoA to form malonyl-CoA. The polypeptide is Acetyl-coenzyme A carboxylase carboxyl transferase subunit beta (Alkalilimnicola ehrlichii (strain ATCC BAA-1101 / DSM 17681 / MLHE-1)).